We begin with the raw amino-acid sequence, 378 residues long: Holliday junction branch migration complex subunit RuvB 1 (378 aa).

Over residues 1–12 the composition is skewed to polar residues; the sequence is MAIISSRDTGQN. The disordered stretch occupies residues 1 to 62; sequence MAIISSRDTG…PGEAQEESLR (62 aa). Positions 13 to 222 are large ATPase domain (RuvB-L); it reads AEGPKRRQQK…FGHVQRLRFY (210 aa). ATP-binding positions include leucine 61, arginine 62, glycine 103, lysine 106, threonine 107, threonine 108, 169–171, arginine 212, tyrosine 222, and arginine 259; that span reads EDF. Threonine 107 lines the Mg(2+) pocket. Positions 223 to 293 are small ATPAse domain (RuvB-S); sequence EPHELVQIVL…VAAAALELFQ (71 aa). The interval 296 to 378 is head domain (RuvB-H); that stretch reads PMGLDWIDRK…EAQSPLPLWS (83 aa). Residues arginine 351 and arginine 356 each coordinate DNA.

This sequence belongs to the RuvB family. As to quaternary structure, homohexamer. Forms an RuvA(8)-RuvB(12)-Holliday junction (HJ) complex. HJ DNA is sandwiched between 2 RuvA tetramers; dsDNA enters through RuvA and exits via RuvB. An RuvB hexamer assembles on each DNA strand where it exits the tetramer. Each RuvB hexamer is contacted by two RuvA subunits (via domain III) on 2 adjacent RuvB subunits; this complex drives branch migration. In the full resolvosome a probable DNA-RuvA(4)-RuvB(12)-RuvC(2) complex forms which resolves the HJ.

It localises to the cytoplasm. It catalyses the reaction ATP + H2O = ADP + phosphate + H(+). The RuvA-RuvB-RuvC complex processes Holliday junction (HJ) DNA during genetic recombination and DNA repair, while the RuvA-RuvB complex plays an important role in the rescue of blocked DNA replication forks via replication fork reversal (RFR). RuvA specifically binds to HJ cruciform DNA, conferring on it an open structure. The RuvB hexamer acts as an ATP-dependent pump, pulling dsDNA into and through the RuvAB complex. RuvB forms 2 homohexamers on either side of HJ DNA bound by 1 or 2 RuvA tetramers; 4 subunits per hexamer contact DNA at a time. Coordinated motions by a converter formed by DNA-disengaged RuvB subunits stimulates ATP hydrolysis and nucleotide exchange. Immobilization of the converter enables RuvB to convert the ATP-contained energy into a lever motion, pulling 2 nucleotides of DNA out of the RuvA tetramer per ATP hydrolyzed, thus driving DNA branch migration. The RuvB motors rotate together with the DNA substrate, which together with the progressing nucleotide cycle form the mechanistic basis for DNA recombination by continuous HJ branch migration. Branch migration allows RuvC to scan DNA until it finds its consensus sequence, where it cleaves and resolves cruciform DNA. This Synechococcus sp. (strain JA-3-3Ab) (Cyanobacteria bacterium Yellowstone A-Prime) protein is Holliday junction branch migration complex subunit RuvB 1.